The chain runs to 950 residues: Zinc finger CCCH domain-containing protein 3 (950 aa).

Disordered stretches follow at residues 32-106 (GNSS…HPEP), 127-182 (IKPP…TKVG), 201-220 (VVKS…RTVS), and 314-489 (SEKS…VLRK). Over residues 56–74 (RPSRRGFSSHHGPSWRKKY) the composition is skewed to basic residues. Residues 76–96 (LVNQPVESSDPASDPAFQTSL) are compositionally biased toward polar residues. Positions 327 to 338 (PRTTLESGNKAT) are enriched in polar residues. Residues 344–360 (KTEKPQPKVDPEVRPEK) show a composition bias toward basic and acidic residues. The segment covering 370 to 388 (SPSKYKWKASSPSASSSSS) has biased composition (low complexity). Residues 402 to 412 (SQLSPVPSRPT) show a composition bias toward polar residues. At Ser405 the chain carries Phosphoserine. The segment covering 438–449 (VKSRTKIIRRRG) has biased composition (basic residues). Positions 460-470 (SPTTATTSKNH) are enriched in polar residues. 5 C3H1-type zinc fingers span residues 662–690 (EKKR…HDPE), 694–717 (VCTR…HHVS), 718–744 (KEKM…HVYV), 745–772 (SRKA…HTLL), and 773–795 (CPDF…HRNQ). The interval 793–950 (RNQKRHGRRT…GKPLHIKPRL (158 aa)) is disordered. A compositionally biased stretch (polar residues) spans 828 to 838 (PTTTQRSVRQM). Residues 839 to 849 (SSGLASGAEAP) show a composition bias toward low complexity. Residues Ser851 and Ser855 each carry the phosphoserine modification. A compositionally biased stretch (low complexity) spans 857 to 888 (RVLASTSTLSSKATAASSPSPSPSTSSPAPSL). The segment covering 914–928 (SLHSSPSPGGQTETG) has biased composition (polar residues). Ser918, Ser920, and Ser934 each carry phosphoserine.

Interacts with SMAD1, SMAD3, SMAD4, CPSF2 and CPSF3.

The protein resides in the nucleus. Required for the export of polyadenylated mRNAs from the nucleus. Enhances ACVR1B-induced SMAD-dependent transcription. Binds to single-stranded DNA but not to double-stranded DNA in vitro. Involved in RNA cleavage. This chain is Zinc finger CCCH domain-containing protein 3 (Zc3h3), found in Mus musculus (Mouse).